Reading from the N-terminus, the 215-residue chain is Probable phosphoglycerate mutase GpmB (215 aa).

Substrate contacts are provided by residues 8–15, 21–22, Arg-58, 82–85, 104–105, and 151–152; these read RHGETQWN, QG, ELDM, RR, and GI. Catalysis depends on His-9, which acts as the Tele-phosphohistidine intermediate. The active-site Proton donor/acceptor is Glu-82.

This sequence belongs to the phosphoglycerate mutase family. GpmB subfamily.

The catalysed reaction is (2R)-2-phosphoglycerate = (2R)-3-phosphoglycerate. The protein operates within carbohydrate degradation; glycolysis; pyruvate from D-glyceraldehyde 3-phosphate: step 3/5. This is Probable phosphoglycerate mutase GpmB from Enterobacter sp. (strain 638).